We begin with the raw amino-acid sequence, 221 residues long: GTP cyclohydrolase-2 (221 aa).

63–67 (RLHSE) lines the GTP pocket. Zn(2+)-binding residues include Cys-68, Cys-79, and Cys-81. GTP-binding positions include Gln-84, 107–109 (EGR), and Thr-129. The active-site Proton acceptor is the Asp-141. Residue Arg-143 is the Nucleophile of the active site. Residues Ser-164 and Lys-169 each coordinate GTP.

Belongs to the GTP cyclohydrolase II family. Zn(2+) serves as cofactor.

The enzyme catalyses GTP + 4 H2O = 2,5-diamino-6-hydroxy-4-(5-phosphoribosylamino)-pyrimidine + formate + 2 phosphate + 3 H(+). The protein operates within cofactor biosynthesis; riboflavin biosynthesis; 5-amino-6-(D-ribitylamino)uracil from GTP: step 1/4. Functionally, catalyzes the conversion of GTP to 2,5-diamino-6-ribosylamino-4(3H)-pyrimidinone 5'-phosphate (DARP), formate and pyrophosphate. This is GTP cyclohydrolase-2 from Streptomyces coelicolor (strain ATCC BAA-471 / A3(2) / M145).